A 475-amino-acid polypeptide reads, in one-letter code: MAVVSEDDFQHSSNSTYRTTSSSLRADQEALLEKLLDRPPPGLQRPEDRFCGTYIIFFSLGIGSLLPWNFFITAKEYWMFKLRNSSSPATGEDPEGSDILNYFESYLAVASTVPSMLCLVANFLLVNRVAVHIRVLASLTVILAIFMVITALVKVDTSSWTRGFFAVTIVCMVILSGASTVFSSSIYGMTGSFPMRNSQALISGGAMGGTVSAVASLVDLAASSDVRNSALAFFLTATVFLVLCMGLYLLLSRLEYARYYMRPVLAAHVFSGEEELPQDSLSAPSVASRFIDSHTPPLRPILKKTASLGFCVTYVFFITSLIYPAICTNIESLNKGSGSLWTTKFFIPLTTFLLYNFADLCGRQLTAWIQVPGPNSKALPGFVLLRTCLIPLFVLCNYQPRVHLKTVVFQSDVYPALLSSLLGLSNGYLSTLALLYGPKIVPRELAEATGVVMSFYVCLGLTLGSACSTLLVHLI.

The segment at 1–24 (MAVVSEDDFQHSSNSTYRTTSSSL) is disordered. The Cytoplasmic segment spans residues 1–53 (MAVVSEDDFQHSSNSTYRTTSSSLRADQEALLEKLLDRPPPGLQRPEDRFCGT). Low complexity predominate over residues 12 to 23 (SSNSTYRTTSSS). Phosphoserine occurs at positions 21 and 23. Residues 31 to 32 (LL) carry the Dileucine internalization motif motif. Residues 54–74 (YIIFFSLGIGSLLPWNFFITA) form a helical membrane-spanning segment. Residues 75 to 105 (KEYWMFKLRNSSSPATGEDPEGSDILNYFES) are Extracellular-facing. Residue Asn-84 is glycosylated (N-linked (GlcNAc...) asparagine). Residues 106–126 (YLAVASTVPSMLCLVANFLLV) form a helical membrane-spanning segment. At 127-134 (NRVAVHIR) the chain is on the cytoplasmic side. Residues 135 to 155 (VLASLTVILAIFMVITALVKV) traverse the membrane as a helical segment. Over 156 to 162 (DTSSWTR) the chain is Extracellular. Residues 163-183 (GFFAVTIVCMVILSGASTVFS) traverse the membrane as a helical segment. The Cytoplasmic segment spans residues 184-199 (SSIYGMTGSFPMRNSQ). The chain crosses the membrane as a helical span at residues 200–220 (ALISGGAMGGTVSAVASLVDL). At 221–230 (AASSDVRNSA) the chain is on the extracellular side. Residues 231–251 (LAFFLTATVFLVLCMGLYLLL) traverse the membrane as a helical segment. Over 252-305 (SRLEYARYYMRPVLAAHVFSGEEELPQDSLSAPSVASRFIDSHTPPLRPILKKT) the chain is Cytoplasmic. The chain crosses the membrane as a helical span at residues 306–326 (ASLGFCVTYVFFITSLIYPAI). The Extracellular portion of the chain corresponds to 327–337 (CTNIESLNKGS). Residues 338 to 358 (GSLWTTKFFIPLTTFLLYNFA) traverse the membrane as a helical segment. Residues 359–377 (DLCGRQLTAWIQVPGPNSK) are Cytoplasmic-facing. A helical transmembrane segment spans residues 378–398 (ALPGFVLLRTCLIPLFVLCNY). Over 399 to 415 (QPRVHLKTVVFQSDVYP) the chain is Extracellular. A helical transmembrane segment spans residues 416 to 436 (ALLSSLLGLSNGYLSTLALLY). Residues 437 to 454 (GPKIVPRELAEATGVVMS) are Cytoplasmic-facing. Residues 455 to 475 (FYVCLGLTLGSACSTLLVHLI) traverse the membrane as a helical segment.

The protein belongs to the SLC29A/ENT transporter (TC 2.A.57) family. As to expression, widely expressed in both adult and fetal tissues. Highest levels in placenta, uterus, ovary, spleen, lymph node and bone marrow. Expressed in liver. Lowest levels in brain and heart. Expressed in macrophages.

It is found in the lysosome membrane. It localises to the late endosome membrane. The protein localises to the mitochondrion membrane. The protein resides in the cell membrane. The catalysed reaction is adenosine(in) = adenosine(out). The enzyme catalyses guanosine(in) = guanosine(out). It carries out the reaction inosine(in) = inosine(out). It catalyses the reaction uridine(out) = uridine(in). The catalysed reaction is cytidine(in) = cytidine(out). The enzyme catalyses thymidine(in) = thymidine(out). It carries out the reaction 2'-deoxyadenosine(in) = 2'-deoxyadenosine(out). It catalyses the reaction 2'-deoxycytidine(in) = 2'-deoxycytidine(out). The catalysed reaction is guanine(out) = guanine(in). The enzyme catalyses uracil(in) = uracil(out). It carries out the reaction (R)-noradrenaline(out) = (R)-noradrenaline(in). It catalyses the reaction dopamine(out) = dopamine(in). The catalysed reaction is serotonin(out) = serotonin(in). The enzyme catalyses tyramine(in) = tyramine(out). It carries out the reaction ATP(in) = ATP(out). Functionally, uniporter that mediates the facilitative transport of nucleoside across lysosomal and mitochondrial membranes. Functions as a non-electrogenic Na(+)-independent transporter. Substrate transport is pH-dependent and enhanced under acidic condition, probably reflecting the location of the transporter in acidic intracellular compartments. Proton is not a cotransporting ion but most likely change the ionization state of the transporter which dictates transport-permissible/impermissible conformation for nucleoside translocation. May direct the nucleoside transport from lysosomes to cytosol or cytosol to mitochondria to facilitate the fundamental function of salvage synthesis of nucleic acids. Involved in the transport of nucleosides (adenosine, guanosine, uridine, thymidine, cytidine and inosine) and deoxynucleosides (deoxyadenosine, deoxycytidine). Also mediates transport of purine nucleobases (adenine, guanine) and pyrimidine nucleobases (uracil). Also able to transport monoamine neurotransmitters dopamine, serotonin, noradrenaline and tyramine. Capable of transporting ATP. Mediates nucleoside export from lysosomes in macrophages, which regulates macrophage functions and numbers. This is Equilibrative nucleoside transporter 3 from Homo sapiens (Human).